The chain runs to 496 residues: Lysine--tRNA ligase (496 aa).

Positions 409 and 416 each coordinate Mg(2+).

It belongs to the class-II aminoacyl-tRNA synthetase family. As to quaternary structure, homodimer. Mg(2+) is required as a cofactor.

The protein localises to the cytoplasm. It carries out the reaction tRNA(Lys) + L-lysine + ATP = L-lysyl-tRNA(Lys) + AMP + diphosphate. The polypeptide is Lysine--tRNA ligase (Streptococcus agalactiae serotype III (strain NEM316)).